Reading from the N-terminus, the 89-residue chain is MAVTTDQKSQVMRDYQRAAGDTGSPEVQVALLTTRINSLVDHFKQHVKDHHSRRGLLRMVSRRRKLLDYLKSKNNDSYRALIERLGLRK.

The span at 1-10 shows a compositional bias: polar residues; it reads MAVTTDQKSQ. The segment at 1–22 is disordered; it reads MAVTTDQKSQVMRDYQRAAGDT.

The protein belongs to the universal ribosomal protein uS15 family. As to quaternary structure, part of the 30S ribosomal subunit. Forms a bridge to the 50S subunit in the 70S ribosome, contacting the 23S rRNA.

Its function is as follows. One of the primary rRNA binding proteins, it binds directly to 16S rRNA where it helps nucleate assembly of the platform of the 30S subunit by binding and bridging several RNA helices of the 16S rRNA. Functionally, forms an intersubunit bridge (bridge B4) with the 23S rRNA of the 50S subunit in the ribosome. The polypeptide is Small ribosomal subunit protein uS15 (Nitrosomonas europaea (strain ATCC 19718 / CIP 103999 / KCTC 2705 / NBRC 14298)).